Reading from the N-terminus, the 425-residue chain is Riboflavin biosynthesis protein RibBA (425 aa).

The DHBP synthase stretch occupies residues 1–204; sequence MTRLDSVERA…IADLIEWRRK (204 aa). D-ribulose 5-phosphate is bound by residues 28–29, D33, 141–145, and E165; these read RE and RPGHT. E29 contacts Mg(2+). H144 lines the Mg(2+) pocket. The segment at 205–425 is GTP cyclohydrolase II; sequence HEKHIERIAE…HLPGEFGGAL (221 aa). 259–263 is a binding site for GTP; the sequence is RVHSE. 3 residues coordinate Zn(2+): C264, C275, and C277. GTP-binding positions include Q280, 303–305, and T325; that span reads EGR. The active-site Proton acceptor; for GTP cyclohydrolase activity is D337. The Nucleophile; for GTP cyclohydrolase activity role is filled by R339. 2 residues coordinate GTP: T360 and K365.

In the N-terminal section; belongs to the DHBP synthase family. The protein in the C-terminal section; belongs to the GTP cyclohydrolase II family. It depends on Mg(2+) as a cofactor. Mn(2+) is required as a cofactor. Zn(2+) serves as cofactor.

The catalysed reaction is D-ribulose 5-phosphate = (2S)-2-hydroxy-3-oxobutyl phosphate + formate + H(+). It carries out the reaction GTP + 4 H2O = 2,5-diamino-6-hydroxy-4-(5-phosphoribosylamino)-pyrimidine + formate + 2 phosphate + 3 H(+). Its pathway is cofactor biosynthesis; riboflavin biosynthesis; 2-hydroxy-3-oxobutyl phosphate from D-ribulose 5-phosphate: step 1/1. It participates in cofactor biosynthesis; riboflavin biosynthesis; 5-amino-6-(D-ribitylamino)uracil from GTP: step 1/4. Its function is as follows. Catalyzes the conversion of D-ribulose 5-phosphate to formate and 3,4-dihydroxy-2-butanone 4-phosphate. Catalyzes the conversion of GTP to 2,5-diamino-6-ribosylamino-4(3H)-pyrimidinone 5'-phosphate (DARP), formate and pyrophosphate. This chain is Riboflavin biosynthesis protein RibBA, found in Mycobacterium avium (strain 104).